The following is a 458-amino-acid chain: UDP-N-acetylmuramate--L-alanine ligase (458 aa).

An ATP-binding site is contributed by 118 to 124 (GTHGKTT).

The protein belongs to the MurCDEF family.

It is found in the cytoplasm. The enzyme catalyses UDP-N-acetyl-alpha-D-muramate + L-alanine + ATP = UDP-N-acetyl-alpha-D-muramoyl-L-alanine + ADP + phosphate + H(+). Its pathway is cell wall biogenesis; peptidoglycan biosynthesis. Functionally, cell wall formation. This chain is UDP-N-acetylmuramate--L-alanine ligase, found in Clostridium botulinum (strain Kyoto / Type A2).